We begin with the raw amino-acid sequence, 651 residues long: DNA mismatch repair protein MutL (651 aa).

It belongs to the DNA mismatch repair MutL/HexB family.

In terms of biological role, this protein is involved in the repair of mismatches in DNA. It is required for dam-dependent methyl-directed DNA mismatch repair. May act as a 'molecular matchmaker', a protein that promotes the formation of a stable complex between two or more DNA-binding proteins in an ATP-dependent manner without itself being part of a final effector complex. This is DNA mismatch repair protein MutL from Streptococcus mutans serotype c (strain ATCC 700610 / UA159).